Here is a 174-residue protein sequence, read N- to C-terminus: ATP-dependent protease subunit HslV (174 aa).

Thr-2 is a catalytic residue. Na(+) contacts are provided by Gly-157, Cys-160, and Thr-163.

Belongs to the peptidase T1B family. HslV subfamily. A double ring-shaped homohexamer of HslV is capped on each side by a ring-shaped HslU homohexamer. The assembly of the HslU/HslV complex is dependent on binding of ATP.

It localises to the cytoplasm. The enzyme catalyses ATP-dependent cleavage of peptide bonds with broad specificity.. Its activity is regulated as follows. Allosterically activated by HslU binding. Functionally, protease subunit of a proteasome-like degradation complex believed to be a general protein degrading machinery. The chain is ATP-dependent protease subunit HslV from Shewanella pealeana (strain ATCC 700345 / ANG-SQ1).